Consider the following 349-residue polypeptide: ATPase GET3 (349 aa).

ATP is bound at residue 26–33 (KGGVGKTT). The active site involves D57. ATP-binding residues include E240 and N267. Zn(2+) is bound by residues C280 and C283.

This sequence belongs to the arsA ATPase family. Homodimer. Component of the Golgi to ER traffic (GET) complex, which is composed of GET1, GET2 and GET3. Within the complex, GET1 and GET2 form a heterotetramer which is stabilized by phosphatidylinositol binding and which binds to the GET3 homodimer. Interacts with the chloride channel protein GEF1.

Its subcellular location is the cytoplasm. It is found in the endoplasmic reticulum. It localises to the golgi apparatus. Functionally, ATPase required for the post-translational delivery of tail-anchored (TA) proteins to the endoplasmic reticulum. Recognizes and selectively binds the transmembrane domain of TA proteins in the cytosol. This complex then targets to the endoplasmic reticulum by membrane-bound receptors GET1 and GET2, where the tail-anchored protein is released for insertion. This process is regulated by ATP binding and hydrolysis. ATP binding drives the homodimer towards the closed dimer state, facilitating recognition of newly synthesized TA membrane proteins. ATP hydrolysis is required for insertion. Subsequently, the homodimer reverts towards the open dimer state, lowering its affinity for the GET1-GET2 receptor, and returning it to the cytosol to initiate a new round of targeting. Cooperates with the HDEL receptor ERD2 to mediate the ATP-dependent retrieval of resident ER proteins that contain a C-terminal H-D-E-L retention signal from the Golgi to the ER. Involved in low-level resistance to the oxyanions arsenite and arsenate, and in heat tolerance. The polypeptide is ATPase GET3 (Lachancea thermotolerans (strain ATCC 56472 / CBS 6340 / NRRL Y-8284) (Yeast)).